The chain runs to 451 residues: tRNA-2-methylthio-N(6)-dimethylallyladenosine synthase (451 aa).

The region spanning 1 to 116 is the MTTase N-terminal domain; sequence MTYFFETYGC…LPQIFDEIKA (116 aa). Residues Cys10, Cys46, Cys79, Cys162, Cys166, and Cys169 each coordinate [4Fe-4S] cluster. The 237-residue stretch at 148-384 folds into the Radical SAM core domain; the sequence is SPKSFQSYVP…IDLQLKITAK (237 aa). The region spanning 387–451 is the TRAM domain; it reads KAKLGKKVDI…KGKTFRANLN (65 aa).

Belongs to the methylthiotransferase family. MiaB subfamily. Monomer. [4Fe-4S] cluster is required as a cofactor.

The protein resides in the cytoplasm. The enzyme catalyses N(6)-dimethylallyladenosine(37) in tRNA + (sulfur carrier)-SH + AH2 + 2 S-adenosyl-L-methionine = 2-methylsulfanyl-N(6)-dimethylallyladenosine(37) in tRNA + (sulfur carrier)-H + 5'-deoxyadenosine + L-methionine + A + S-adenosyl-L-homocysteine + 2 H(+). Its function is as follows. Catalyzes the methylthiolation of N6-(dimethylallyl)adenosine (i(6)A), leading to the formation of 2-methylthio-N6-(dimethylallyl)adenosine (ms(2)i(6)A) at position 37 in tRNAs that read codons beginning with uridine. The protein is tRNA-2-methylthio-N(6)-dimethylallyladenosine synthase of Treponema denticola (strain ATCC 35405 / DSM 14222 / CIP 103919 / JCM 8153 / KCTC 15104).